Reading from the N-terminus, the 207-residue chain is Microtubule-associated protein Jupiter (207 aa).

Phosphoserine is present on serine 30. Phosphothreonine occurs at positions 41 and 102. Phosphoserine occurs at positions 111, 138, and 149. Disordered regions lie at residues 129–174 (KGKY…YKAG) and 188–207 (GNQVINKNRVPPGGYSSGLW). The span at 136-149 (SGSVSSASSSVSSS) shows a compositional bias: low complexity. The segment covering 150–164 (TENLKINVGNRSDGN) has biased composition (polar residues).

Belongs to the MAP Jupiter family.

The protein resides in the nucleus. It localises to the cytoplasm. Its subcellular location is the cytoskeleton. The protein localises to the spindle. Binds to all microtubule populations. This chain is Microtubule-associated protein Jupiter, found in Drosophila grimshawi (Hawaiian fruit fly).